Here is a 418-residue protein sequence, read N- to C-terminus: Serine hydroxymethyltransferase (418 aa).

(6S)-5,6,7,8-tetrahydrofolate contacts are provided by residues Leu120 and 124–126 (GHL). Lys229 bears the N6-(pyridoxal phosphate)lysine mark.

This sequence belongs to the SHMT family. In terms of assembly, homodimer. Requires pyridoxal 5'-phosphate as cofactor.

The protein resides in the cytoplasm. The enzyme catalyses (6R)-5,10-methylene-5,6,7,8-tetrahydrofolate + glycine + H2O = (6S)-5,6,7,8-tetrahydrofolate + L-serine. The protein operates within one-carbon metabolism; tetrahydrofolate interconversion. It participates in amino-acid biosynthesis; glycine biosynthesis; glycine from L-serine: step 1/1. Functionally, catalyzes the reversible interconversion of serine and glycine with tetrahydrofolate (THF) serving as the one-carbon carrier. This reaction serves as the major source of one-carbon groups required for the biosynthesis of purines, thymidylate, methionine, and other important biomolecules. Also exhibits THF-independent aldolase activity toward beta-hydroxyamino acids, producing glycine and aldehydes, via a retro-aldol mechanism. This chain is Serine hydroxymethyltransferase, found in Myxococcus xanthus (strain DK1622).